A 522-amino-acid chain; its full sequence is Glycogen synthase (522 aa).

Residues 1–29 form a disordered region; sequence MISAVLDTQGDHPQQQAGDRAAPSVPVPG. Position 58 (K58) interacts with ADP-alpha-D-glucose.

This sequence belongs to the glycosyltransferase 1 family. Bacterial/plant glycogen synthase subfamily.

The catalysed reaction is [(1-&gt;4)-alpha-D-glucosyl](n) + ADP-alpha-D-glucose = [(1-&gt;4)-alpha-D-glucosyl](n+1) + ADP + H(+). Its pathway is glycan biosynthesis; glycogen biosynthesis. Synthesizes alpha-1,4-glucan chains using ADP-glucose. In Pseudomonas fluorescens (strain ATCC BAA-477 / NRRL B-23932 / Pf-5), this protein is Glycogen synthase.